The chain runs to 419 residues: Divergent protein kinase domain 1C (419 aa).

The Cytoplasmic portion of the chain corresponds to 1–22; that stretch reads MARAAGARGPAGWCRRRGRCGR. The short motif at 16 to 17 is the May mediate ER retention element; the sequence is RR. Residues 23-43 traverse the membrane as a helical segment; the sequence is GTLLAFAAWTAGWVLAAALLL. Topologically, residues 44-419 are lumenal; the sequence is RAHPGVLSER…TLRELQEAEK (376 aa).

The protein belongs to the DIPK family. In terms of processing, among the many cysteines in the lumenal domain, most are probably involved in disulfide bonds.

The protein resides in the endoplasmic reticulum membrane. This is Divergent protein kinase domain 1C from Homo sapiens (Human).